A 686-amino-acid chain; its full sequence is Thymidine kinase (686 aa).

Residues M1 to R14 show a composition bias toward polar residues. Disordered regions lie at residues M1–K21 and N64–D85. G243 to T250 contacts ATP. Catalysis depends on E270, which acts as the Proton acceptor. Q308 provides a ligand contact to substrate. R398 is an ATP binding site. R404 provides a ligand contact to substrate.

Belongs to the herpesviridae thymidine kinase family. Homodimer.

It catalyses the reaction thymidine + ATP = dTMP + ADP + H(+). In terms of biological role, catalyzes the transfer of the gamma-phospho group of ATP to thymidine to generate dTMP in the salvage pathway of pyrimidine synthesis. The dTMP serves as a substrate for DNA polymerase during viral DNA replication. Allows the virus to be reactivated and to grow in non-proliferative cells lacking a high concentration of phosphorylated nucleic acid precursors. This is Thymidine kinase from Alcelaphine herpesvirus 1 (strain WC11) (AlHV-1).